The sequence spans 982 residues: Protein phosphatase 1 regulatory subunit 12B (982 aa).

Positions 1-24 (MAELEHLGGKRAESARMRRAEQLR) are enriched in basic and acidic residues. The tract at residues 1 to 50 (MAELEHLGGKRAESARMRRAEQLRRWRGSLTEQEPAERRGAGRQPLTRRG) is disordered. Serine 29 is modified (phosphoserine). ANK repeat units follow at residues 57–86 (EDGA…DINT), 90–119 (DGLT…NVNQ), 123–152 (EGWT…SVGI), 216–245 (SGAT…ELNV), and 249–278 (DGWT…DMDI). Disordered stretches follow at residues 342 to 517 (EETP…RESA), 556 to 579 (RTPH…SSTP), 606 to 864 (TDSS…EARE), and 918 to 948 (AQQK…KMSE). Residues 362–374 (SEEEEGEDEASES) are compositionally biased toward acidic residues. Positions 375–385 (ETEKEADKKPE) are enriched in basic and acidic residues. The segment covering 389-401 (NHSNSESKSSITE) has biased composition (polar residues). Low complexity predominate over residues 411-421 (FSASSARRFSS). Threonine 445 is modified (phosphothreonine). Low complexity predominate over residues 466-478 (SSIYRSSSSPRIS). Residues 482 to 491 (DNKDKERENK) are compositionally biased toward basic and acidic residues. Over residues 623–632 (VRDEEAESLR) the composition is skewed to basic and acidic residues. Over residues 633–643 (KARSRQARQTR) the composition is skewed to basic residues. Threonine 646 is subject to Phosphothreonine. Residues 656-680 (EAERTFSRSRAERQAQEQPREKPTD) are compositionally biased toward basic and acidic residues. Positions 731–742 (TTPASPSTSRPS) are enriched in low complexity. Residues 743 to 755 (LYTSSHLLWTNRF) show a composition bias toward polar residues. The segment covering 797–807 (ERRRPKERRRG) has biased composition (basic residues). A Phosphothreonine modification is found at threonine 808. A compositionally biased stretch (basic and acidic residues) spans 824–836 (EEVKETWHERLSR). Serine 839 bears the Phosphoserine mark. Residues 840 to 849 (GGSNPTTSDS) show a composition bias toward polar residues. Basic and acidic residues-rich tracts occupy residues 850–864 (YGDR…EARE), 918–927 (AQQKQEKTSD), and 933–948 (EMEK…KMSE). The residue at position 947 (serine 947) is a Phosphoserine.

PP1 comprises a catalytic subunit, PPP1CA, PPP1CB or PPP1CC, and one or several targeting or regulatory subunits. PPP1R12B mediates binding to myosin. Isoform 3 and isoform 4 bind PPP1R12A, but not isoform 1 of PPP1R12B itself. Binds IL16. Detected in skeletal muscle, fetal and adult heart, brain, placenta, kidney, spleen, thymus, pancreas and lung. Isoform 3 and isoform 4 are heart specific.

It localises to the cytoplasm. Its subcellular location is the cytoskeleton. It is found in the stress fiber. In terms of biological role, regulates myosin phosphatase activity. Augments Ca(2+) sensitivity of the contractile apparatus. The sequence is that of Protein phosphatase 1 regulatory subunit 12B (PPP1R12B) from Homo sapiens (Human).